Here is a 390-residue protein sequence, read N- to C-terminus: GDSL esterase/lipase At1g28640 (390 aa).

An N-terminal signal peptide occupies residues 1–26 (MASSLEKLISSFLLVLYSTTIIVASS). Catalysis depends on S42, which acts as the Nucleophile. 3 N-linked (GlcNAc...) asparagine glycosylation sites follow: N105, N138, and N321. Active-site residues include D346 and H349. A glycan (N-linked (GlcNAc...) asparagine) is linked at N364.

The protein belongs to the 'GDSL' lipolytic enzyme family.

Its subcellular location is the secreted. The chain is GDSL esterase/lipase At1g28640 from Arabidopsis thaliana (Mouse-ear cress).